The following is a 361-amino-acid chain: NAD-dependent protein deacetylase hst2-1 (361 aa).

Positions 16–276 constitute a Deacetylase sirtuin-type domain; it reads SVLEARTVEA…RKLARALGWE (261 aa). NAD(+) contacts are provided by residues 43-63 and 126-129; these read GAGI…TGIY and QNID. Residue His146 is the Proton acceptor of the active site. Zn(2+) contacts are provided by Cys154, Cys157, Cys178, and Cys181. NAD(+) contacts are provided by residues 217–219, 242–244, and Cys262; these read GTS and NRE. The stretch at 294 to 328 forms a coiled coil; that stretch reads EEELATPRTREERLENEISRLTAEIDKTLKISDAY. Residues 335-361 form a disordered region; that stretch reads RLEGEPLSSPESNGTGLAHVFPHLARR.

This sequence belongs to the sirtuin family. Class I subfamily. It depends on Zn(2+) as a cofactor.

It localises to the cytoplasm. The protein resides in the nucleus. The catalysed reaction is N(6)-acetyl-L-lysyl-[protein] + NAD(+) + H2O = 2''-O-acetyl-ADP-D-ribose + nicotinamide + L-lysyl-[protein]. Its function is as follows. NAD-dependent histone deacetylase, which could function in telomeric silencing, cell cycle progression and chromosome stability. The polypeptide is NAD-dependent protein deacetylase hst2-1 (Emericella nidulans (strain FGSC A4 / ATCC 38163 / CBS 112.46 / NRRL 194 / M139) (Aspergillus nidulans)).